The chain runs to 88 residues: Large ribosomal subunit protein bL31B (88 aa).

Belongs to the bacterial ribosomal protein bL31 family. Type B subfamily. Part of the 50S ribosomal subunit.

The polypeptide is Large ribosomal subunit protein bL31B (Pasteurella multocida (strain Pm70)).